We begin with the raw amino-acid sequence, 162 residues long: MNINATARSLLLTEFVSAFFLAMRYFFRPKPTINYPFEKNPISPRFRGEHALRRYPNGEERCIACKLCEAICPAQAITIEAGPRRNDGTRRTVRYDIDMVKCIYCGLCQEACPVDAIVEGPNFEFATETREELYYDKARLLANGDRWEREIAKSIELDAPYR.

2 consecutive 4Fe-4S ferredoxin-type domains span residues 52 to 82 (LRRY…IEAG) and 93 to 122 (VRYD…EGPN). [4Fe-4S] cluster contacts are provided by Cys-62, Cys-65, Cys-68, Cys-72, Cys-102, Cys-105, Cys-108, and Cys-112.

It belongs to the complex I 23 kDa subunit family. NDH-1 is composed of 14 different subunits. Subunits NuoA, H, J, K, L, M, N constitute the membrane sector of the complex. [4Fe-4S] cluster serves as cofactor.

The protein localises to the cell inner membrane. It carries out the reaction a quinone + NADH + 5 H(+)(in) = a quinol + NAD(+) + 4 H(+)(out). Its function is as follows. NDH-1 shuttles electrons from NADH, via FMN and iron-sulfur (Fe-S) centers, to quinones in the respiratory chain. The immediate electron acceptor for the enzyme in this species is believed to be ubiquinone. Couples the redox reaction to proton translocation (for every two electrons transferred, four hydrogen ions are translocated across the cytoplasmic membrane), and thus conserves the redox energy in a proton gradient. The polypeptide is NADH-quinone oxidoreductase subunit I 2 (Rhodopseudomonas palustris (strain BisB5)).